A 378-amino-acid polypeptide reads, in one-letter code: 1-acyl-sn-glycerol-3-phosphate acyltransferase delta (378 aa).

A helical transmembrane segment spans residues 11–31 (FLCHLVFCYVFIASGLIINTI). An HXXXXD motif motif is present at residues 96-101 (HKFEID). The next 3 helical transmembrane spans lie at 125–145 (ELAY…VFCS), 307–327 (TLVN…QFLV), and 338–358 (LASF…MIGV).

This sequence belongs to the 1-acyl-sn-glycerol-3-phosphate acyltransferase family.

Its subcellular location is the endoplasmic reticulum membrane. The catalysed reaction is a 1-acyl-sn-glycero-3-phosphate + an acyl-CoA = a 1,2-diacyl-sn-glycero-3-phosphate + CoA. The enzyme catalyses (4Z,7Z,10Z,13Z,16Z,19Z)-docosahexaenoyl-CoA + 1-hexadecanoyl-sn-glycero-3-phosphate = 1-hexadecanoyl-2-(4Z,7Z,10Z,13Z,16Z,19Z-docosahexaenoyl)-sn-glycero-3-phosphate + CoA. It catalyses the reaction 1-octadecanoyl-sn-glycero-3-phosphate + (9Z,12Z)-octadecadienoyl-CoA = 1-octadecanoyl-2-(9Z,12Z-octadecadienoyl)-sn-glycero-3-phosphate + CoA. It carries out the reaction 1-octadecanoyl-sn-glycero-3-phosphate + (4Z,7Z,10Z,13Z,16Z,19Z)-docosahexaenoyl-CoA = 1-octadecanoyl-2-(4Z,7Z,10Z,13Z,16Z,19Z-docosahexaenoyl)-sn-glycero-3-phosphate + CoA. The catalysed reaction is (4Z,7Z,10Z,13Z,16Z,19Z)-docosahexaenoyl-CoA + 1-(9Z-octadecenoyl)-sn-glycero-3-phosphate = 1-(9Z-octadecenoyl)-2-(4Z,7Z,10Z,13Z,16Z,19Z-docosahexaenoyl)-sn-glycero-3-phosphate + CoA. Its pathway is phospholipid metabolism; CDP-diacylglycerol biosynthesis; CDP-diacylglycerol from sn-glycerol 3-phosphate: step 2/3. Its function is as follows. Converts 1-acyl-sn-glycerol-3-phosphate (lysophosphatidic acid or LPA) into 1,2-diacyl-sn-glycerol-3-phosphate (phosphatidic acid or PA) by incorporating an acyl moiety at the sn-2 position of the glycerol backbone. Exhibits high acyl-CoA specificity for polyunsaturated fatty acyl-CoA, especially docosahexaenoyl-CoA (22:6-CoA, DHA-CoA). This chain is 1-acyl-sn-glycerol-3-phosphate acyltransferase delta (AGPAT4), found in Pongo abelii (Sumatran orangutan).